The following is a 97-amino-acid chain: Large ribosomal subunit protein bL28 (97 aa).

This sequence belongs to the bacterial ribosomal protein bL28 family.

This Nitrobacter winogradskyi (strain ATCC 25391 / DSM 10237 / CIP 104748 / NCIMB 11846 / Nb-255) protein is Large ribosomal subunit protein bL28.